The sequence spans 102 residues: MGKTGNIEHVEERVESELMPPSMYKVILNNDDYTPMDFVIEVLQIFFRKNEQEATDIMLTIHHQGKGICGIFPYGIAETKVIQVNQFARQNQHPLLCSLEKA.

It belongs to the ClpS family. Binds to the N-terminal domain of the chaperone ClpA.

In terms of biological role, involved in the modulation of the specificity of the ClpAP-mediated ATP-dependent protein degradation. This Shewanella sp. (strain ANA-3) protein is ATP-dependent Clp protease adapter protein ClpS.